Here is a 295-residue protein sequence, read N- to C-terminus: Putative clathrin assembly protein At5g65370 (295 aa).

The ENTH domain occupies 26 to 169 (CSSVNAKTID…SIAEVLGITP (144 aa)).

The protein localises to the membrane. The protein resides in the clathrin-coated pit. It is found in the golgi apparatus. Its subcellular location is the cytoplasmic vesicle. It localises to the clathrin-coated vesicle. The protein is Putative clathrin assembly protein At5g65370 of Arabidopsis thaliana (Mouse-ear cress).